We begin with the raw amino-acid sequence, 408 residues long: MSWDQVWIDVNVATMDPSISAPYGAITHAAIAVKDGKIAWLGPRSELPAFDVLSIPVYRGKGGWITPGLIDAHTHLVFAGNRANEFELRLKGATYEEIARAGGGIISTVNACREADEAALFELGRQRLNALAKEGVTTVEIKSGYGLDTETELKILRVARELGKHHHVDVKTTFLGAHAVPPEYKGNSDGYVDLIINKMLPAVIKENLADAVDVFCENIAFNLEQTERVLSAAKAAGLQVKLHAEQLSNMGGSELAARLGAKSVDHIEYLDEAGVKALSESGTCAVLLPGAFYFLRETQKPPIDLLRQYGVPMVLASDFNPGSFPICSTLLMLNMGCTLFRLTPEEALAGLTLNAAKALGIEDKVGSLVVGKQADFCLWNIATPAQLAYSYGVNPCKDVVKNGKLVHQ.

2 residues coordinate Fe(3+): His73 and His75. Zn(2+) is bound by residues His73 and His75. Positions 82, 145, and 178 each coordinate 4-imidazolone-5-propanoate. Position 145 (Tyr145) interacts with N-formimidoyl-L-glutamate. His243 lines the Fe(3+) pocket. His243 lines the Zn(2+) pocket. Residue Gln246 participates in 4-imidazolone-5-propanoate binding. Asp318 contributes to the Fe(3+) binding site. Asp318 contributes to the Zn(2+) binding site. N-formimidoyl-L-glutamate-binding residues include Asn320 and Gly322. Ser323 serves as a coordination point for 4-imidazolone-5-propanoate.

The protein belongs to the metallo-dependent hydrolases superfamily. HutI family. The cofactor is Zn(2+). It depends on Fe(3+) as a cofactor.

It is found in the cytoplasm. The enzyme catalyses 4-imidazolone-5-propanoate + H2O = N-formimidoyl-L-glutamate. Its pathway is amino-acid degradation; L-histidine degradation into L-glutamate; N-formimidoyl-L-glutamate from L-histidine: step 3/3. In terms of biological role, catalyzes the hydrolytic cleavage of the carbon-nitrogen bond in imidazolone-5-propanoate to yield N-formimidoyl-L-glutamate. It is the third step in the universal histidine degradation pathway. The protein is Imidazolonepropionase of Shewanella oneidensis (strain ATCC 700550 / JCM 31522 / CIP 106686 / LMG 19005 / NCIMB 14063 / MR-1).